The primary structure comprises 218 residues: Putative copper transporter crmD (218 aa).

Helical transmembrane passes span tyrosine 37–leucine 57 and methionine 176–valine 196.

The protein belongs to the copper transporter (Ctr) (TC 1.A.56) family. SLC31A subfamily.

The protein localises to the membrane. It catalyses the reaction Cu(2+)(in) = Cu(2+)(out). Its function is as follows. Putative copper transporter; part of the crm gene cluster that mediates the biosynthesis of a yet unidentified copper-responsive metabolite. Probably involved in the transport of copper, even if it does not act as a major copper transporter. In contrast to crmA, is not involved in the biosynthesis of fumivalines or fumicicolins. The protein is Putative copper transporter crmD of Aspergillus fumigatus (strain ATCC MYA-4609 / CBS 101355 / FGSC A1100 / Af293) (Neosartorya fumigata).